Consider the following 430-residue polypeptide: Adenylosuccinate synthetase (430 aa).

GTP-binding positions include 12-18 (GDEGKGK) and 40-42 (GHT). Asp13 serves as the catalytic Proton acceptor. 2 residues coordinate Mg(2+): Asp13 and Gly40. IMP is bound by residues 13–16 (DEGK), 38–41 (NAGH), Thr128, Arg142, Gln223, Thr238, and Arg302. The Proton donor role is filled by His41. 298 to 304 (VNTGRKR) contributes to the substrate binding site. GTP contacts are provided by residues Arg304, 330–332 (KLD), and 412–414 (GVG).

This sequence belongs to the adenylosuccinate synthetase family. Homodimer. Mg(2+) serves as cofactor.

The protein resides in the cytoplasm. The enzyme catalyses IMP + L-aspartate + GTP = N(6)-(1,2-dicarboxyethyl)-AMP + GDP + phosphate + 2 H(+). The protein operates within purine metabolism; AMP biosynthesis via de novo pathway; AMP from IMP: step 1/2. Functionally, plays an important role in the de novo pathway of purine nucleotide biosynthesis. Catalyzes the first committed step in the biosynthesis of AMP from IMP. In Corynebacterium aurimucosum (strain ATCC 700975 / DSM 44827 / CIP 107346 / CN-1) (Corynebacterium nigricans), this protein is Adenylosuccinate synthetase.